A 306-amino-acid polypeptide reads, in one-letter code: Protoheme IX farnesyltransferase (306 aa).

9 helical membrane passes run 35–55 (LIVFCALIGMVLAVPGVPTWL), 61–81 (LIACAGIWLVAGAAAAFNCLV), 106–126 (LTLAFSAGLCALGSWVLYVWV), 129–149 (LTMWLTFATFVGYAVVYTVIL), 157–177 (IVIGGASGAMPPVLGWAAMTG), 183–203 (ALILFLIIFLWTPPHFWALAL), 224–244 (EFTRLQVFLYTLVLFPACLMP), 245–265 (FIFKMSGWLYLVAAVLLSIGF), and 286–306 (RFSLIHLSALFAALLLDHYLI).

This sequence belongs to the UbiA prenyltransferase family. Protoheme IX farnesyltransferase subfamily.

Its subcellular location is the cell inner membrane. The catalysed reaction is heme b + (2E,6E)-farnesyl diphosphate + H2O = Fe(II)-heme o + diphosphate. The protein operates within porphyrin-containing compound metabolism; heme O biosynthesis; heme O from protoheme: step 1/1. In terms of biological role, converts heme B (protoheme IX) to heme O by substitution of the vinyl group on carbon 2 of heme B porphyrin ring with a hydroxyethyl farnesyl side group. This Polaromonas naphthalenivorans (strain CJ2) protein is Protoheme IX farnesyltransferase.